The following is a 609-amino-acid chain: CTTNBP2 N-terminal-like protein (609 aa).

Positions 1 to 10 are enriched in polar residues; sequence MEQNSNSSVA. The tract at residues 1–29 is disordered; sequence MEQNSNSSVADTFAEAPATDADYGTENCS. Coiled-coil stretches lie at residues 182–264 and 303–370; these read RMVN…QKQI and IAEG…QQLG. A disordered region spans residues 556 to 584; that stretch reads PPAGARGAPPPIPTKPIVPPKREPSLSRL. Over residues 563–574 the composition is skewed to pro residues; sequence APPPIPTKPIVP. Phosphoserine is present on serine 586.

The protein localises to the cell projection. The protein resides in the lamellipodium. It is found in the cytoplasm. It localises to the cytoskeleton. Its subcellular location is the stress fiber. In terms of biological role, regulates lamellipodial actin dynamics in a Cortactin-dependent manner and is therefore likely involved in controlling actin branch density, actin-retrograde flow rates and lamellipodial protrusion. Functions by slowing the dissociation of Cortactin from Arp2/3 nucleated branches thereby increasing branch nucleation and junction stability. Associates with core striatin-interacting phosphatase and kinase (STRIPAK) complex to form CTTNBP2NL-STRIPAK complexes. STRIPAK complexes have critical roles in protein (de)phosphorylation and are regulators of multiple signaling pathways including Hippo, MAPK, nuclear receptor and cytoskeleton remodeling. Different types of STRIPAK complexes are involved in a variety of biological processes such as cell growth, differentiation, apoptosis, metabolism and immune regulation. This chain is CTTNBP2 N-terminal-like protein, found in Drosophila melanogaster (Fruit fly).